Here is a 284-residue protein sequence, read N- to C-terminus: Tropomyosin (284 aa).

Residues 1–284 adopt a coiled-coil conformation; sequence MDGIKKKMIA…DQTFAELTGY (284 aa). Residues 111-131 form a disordered region; it reads TKLEEASKTAEESERGRKDLE.

The protein belongs to the tropomyosin family. Homodimer.

Functionally, tropomyosin, in association with the troponin complex, plays a central role in the calcium dependent regulation of muscle contraction. This chain is Tropomyosin, found in Schistosoma haematobium (Blood fluke).